Consider the following 590-residue polypeptide: Auxin response factor 20 (590 aa).

The segment at residues 126-224 is a DNA-binding region (TF-B3); it reads FTKVLTASDT…ELRVGIRRAR (99 aa). A PB1 domain is found at 495–576; sequence RTCTKVQMQG…MVKKILIYSK (82 aa).

The protein belongs to the ARF family. As to quaternary structure, homodimers and heterodimers.

The protein resides in the nucleus. In terms of biological role, auxin response factors (ARFs) are transcriptional factors that bind specifically to the DNA sequence 5'-TGTCTC-3' found in the auxin-responsive promoter elements (AuxREs). Could act as transcriptional activator or repressor. Formation of heterodimers with Aux/IAA proteins may alter their ability to modulate early auxin response genes expression. In Arabidopsis thaliana (Mouse-ear cress), this protein is Auxin response factor 20 (ARF20).